Here is a 113-residue protein sequence, read N- to C-terminus: Stigma/stylar cysteine-rich adhesin (113 aa).

An N-terminal signal peptide occupies residues 1 to 22 (MARSSAVCFLLLLAFLIGTASA). 4 cysteine pairs are disulfide-bonded: C25–C72, C35–C49, C50–C95, and C70–C109.

The protein belongs to the plant LTP family. As to expression, highly expressed in style and stigma, abundant in young leaves and petals, and low expression in young anthers at pollen mother cell stage with an active tapetum. Not expressed in mature leaves or in pollen grains or tubes. Found in the stylar transmitting tract epidermis and in the stylar extracellular matrix.

In terms of biological role, acts as an adhesive agent between the pollen tube wall and the stylar transmitting tract epidermis. Binds a stylar pectin in a pH-dependent manner. Enhances activity of chemocyanin, a diffusible chemotropic factor. The polypeptide is Stigma/stylar cysteine-rich adhesin (SCA) (Lilium longiflorum (Trumpet lily)).